The chain runs to 288 residues: Nucleotide-binding protein Gura_2968 (288 aa).

8–15 contacts ATP; that stretch reads GLSGSGKS. 59-62 is a binding site for GTP; the sequence is DIRG.

The protein belongs to the RapZ-like family.

Functionally, displays ATPase and GTPase activities. In Geotalea uraniireducens (strain Rf4) (Geobacter uraniireducens), this protein is Nucleotide-binding protein Gura_2968.